The following is a 267-amino-acid chain: Probable ribose-5-phosphate isomerase 1 (267 aa).

Glycine 2 is subject to N-acetylglycine. Serine 92 carries the post-translational modification Phosphoserine.

This sequence belongs to the ribose 5-phosphate isomerase family. As to expression, expressed in roots, cotyledons, leaves and flowers.

Its subcellular location is the cytoplasm. The catalysed reaction is aldehydo-D-ribose 5-phosphate = D-ribulose 5-phosphate. It functions in the pathway carbohydrate degradation; pentose phosphate pathway; D-ribose 5-phosphate from D-ribulose 5-phosphate (non-oxidative stage): step 1/1. Functionally, catalyzes the reversible conversion of ribose-5-phosphate to ribulose 5-phosphate. The protein is Probable ribose-5-phosphate isomerase 1 (RPI1) of Arabidopsis thaliana (Mouse-ear cress).